A 237-amino-acid chain; its full sequence is Ubiquitin-conjugating enzyme E2 34 (237 aa).

The region spanning 5–162 (ACIKRLQKEY…FPEYVEKYNQ (158 aa)) is the UBC core domain. The active-site Glycyl thioester intermediate is cysteine 87. The tract at residues 168–207 (QATTQLTTPESPQKSDTKVESEKTIDPTKGDSEGGLKERK) is disordered. The segment covering 180–204 (QKSDTKVESEKTIDPTKGDSEGGLK) has biased composition (basic and acidic residues). The helical transmembrane segment at 214-234 (LPAWIILLLVSVFGVVMALPL) threads the bilayer.

Belongs to the ubiquitin-conjugating enzyme family.

It is found in the membrane. It catalyses the reaction S-ubiquitinyl-[E1 ubiquitin-activating enzyme]-L-cysteine + [E2 ubiquitin-conjugating enzyme]-L-cysteine = [E1 ubiquitin-activating enzyme]-L-cysteine + S-ubiquitinyl-[E2 ubiquitin-conjugating enzyme]-L-cysteine.. It participates in protein modification; protein ubiquitination. Functionally, accepts the ubiquitin from the E1 complex and catalyzes its covalent attachment to other proteins. This Arabidopsis thaliana (Mouse-ear cress) protein is Ubiquitin-conjugating enzyme E2 34 (UBC34).